A 163-amino-acid chain; its full sequence is MIKFTHLVHHHHDEHHHGEEHTHNTAELTICLTMQERTKSRLKVMLSDGSEAGLFLPRGTVLKEHDIVESDDGVQAMITAAEETVSTVYSDDLLLLAKACYHLGNRHVPLQVEAGWCRYLHDHVLDDMVQRLGLNVKVEQAKYQPEPGAYGGSSAGSHDGHHH.

The disordered stretch occupies residues 144–163 (QPEPGAYGGSSAGSHDGHHH).

It belongs to the UreE family.

The protein localises to the cytoplasm. Its function is as follows. Involved in urease metallocenter assembly. Binds nickel. Probably functions as a nickel donor during metallocenter assembly. This Aliivibrio fischeri (strain MJ11) (Vibrio fischeri) protein is Urease accessory protein UreE.